Reading from the N-terminus, the 326-residue chain is 4-hydroxythreonine-4-phosphate dehydrogenase (326 aa).

Substrate is bound by residues H130 and T131. H160, H205, and H260 together coordinate a divalent metal cation. Residues K268, N277, and R286 each coordinate substrate.

The protein belongs to the PdxA family. Homodimer. Requires Zn(2+) as cofactor. The cofactor is Mg(2+). Co(2+) is required as a cofactor.

Its subcellular location is the cytoplasm. It carries out the reaction 4-(phosphooxy)-L-threonine + NAD(+) = 3-amino-2-oxopropyl phosphate + CO2 + NADH. It functions in the pathway cofactor biosynthesis; pyridoxine 5'-phosphate biosynthesis; pyridoxine 5'-phosphate from D-erythrose 4-phosphate: step 4/5. Functionally, catalyzes the NAD(P)-dependent oxidation of 4-(phosphooxy)-L-threonine (HTP) into 2-amino-3-oxo-4-(phosphooxy)butyric acid which spontaneously decarboxylates to form 3-amino-2-oxopropyl phosphate (AHAP). In Aromatoleum aromaticum (strain DSM 19018 / LMG 30748 / EbN1) (Azoarcus sp. (strain EbN1)), this protein is 4-hydroxythreonine-4-phosphate dehydrogenase.